Consider the following 250-residue polypeptide: Coproheme decarboxylase (250 aa).

Fe-coproporphyrin III contacts are provided by residues Arg-131, 145–149 (YPMNK), His-172, and Gln-185. Tyr-145 is a catalytic residue.

Belongs to the ChdC family. Type 1 subfamily. It depends on Fe-coproporphyrin III as a cofactor.

It catalyses the reaction Fe-coproporphyrin III + 2 H2O2 + 2 H(+) = heme b + 2 CO2 + 4 H2O. The enzyme catalyses Fe-coproporphyrin III + H2O2 + H(+) = harderoheme III + CO2 + 2 H2O. The catalysed reaction is harderoheme III + H2O2 + H(+) = heme b + CO2 + 2 H2O. It functions in the pathway porphyrin-containing compound metabolism; protoheme biosynthesis. Involved in coproporphyrin-dependent heme b biosynthesis. Catalyzes the decarboxylation of Fe-coproporphyrin III (coproheme) to heme b (protoheme IX), the last step of the pathway. The reaction occurs in a stepwise manner with a three-propionate intermediate. This chain is Coproheme decarboxylase, found in Staphylococcus aureus (strain Mu50 / ATCC 700699).